The following is a 390-amino-acid chain: Neutrophil cytosol factor 1 (390 aa).

One can recognise a PX domain in the interval 4-125 (TFIRHIALLG…DFFKVRPDDL (122 aa)). SH3 domains lie at 156 to 215 (IILQ…PLDS) and 226 to 285 (YAGE…KSGQ). The disordered stretch occupies residues 285–390 (QDVSQAQRQI…STKRKLASAV (106 aa)). Phosphoserine occurs at positions 303 and 304. Residues 309 to 318 (HSIHQRSRKR) show a composition bias toward basic residues. Residues Ser320, Ser328, Ser345, and Ser348 each carry the phosphoserine modification.

Component of the phagocyte NADPH oxidase complex composed of an obligatory core heterodimer formed by the membrane proteins CYBA and CYBB and the cytosolic regulatory subunits NCF1/p47-phox, NCF2/p67-phox, NCF4/p40-phox and the small GTPase RAC1 or RAC2. Part of a cytosolic complex composed at least by NCF1, NCF2 and NCF4. Interacts (via C-terminus) with NCF2 (via the C-terminal SH3 domain). Interacts with NCF4. Interacts with CYBB. Interacts (via the second SH3 domain) with CYBA; interaction is phosphorylation-dependent. Interacts with NOXA1. Interacts with ADAM15. Interacts with TRAF4. Interacts with FASLG. Interacts with PARK7 (via C-terminus); the interaction is enhanced by LPS and modulates NCF1 phosphorylation and membrane translocation. Phosphorylated by PRKCD; phosphorylation induces activation of NCF1, leading to assembly and activation of the NADPH oxidase complex. Detected in peripheral blood monocytes and neutrophils (at protein level).

It is found in the cytoplasm. The protein resides in the cytosol. The protein localises to the membrane. Its function is as follows. Subunit of the phagocyte NADPH oxidase complex that mediates the transfer of electrons from cytosolic NADPH to O2 to produce the superoxide anion (O2(-)). In the activated complex, electrons are first transferred from NADPH to flavin adenine dinucleotide (FAD) and subsequently transferred via two heme molecules to molecular oxygen, producing superoxide through an outer-sphere reaction. Activation of the NADPH oxidase complex is initiated by the assembly of cytosolic subunits of the NADPH oxidase complex with the core NADPH oxidase complex to form a complex at the plasma membrane or phagosomal membrane. This activation process is initiated by phosphorylation dependent binding of the cytosolic NCF1/p47-phox subunit to the C-terminus of CYBA/p22-phox. The chain is Neutrophil cytosol factor 1 from Homo sapiens (Human).